Reading from the N-terminus, the 355-residue chain is MLASKLDPFFKRFEELNSLLSSSDILNDISKMTTLSKEQKNLEPIVLKAKEYLKTLDNIEENKALLNDPELGELAKEELKTLEELKPKLEEEIKILLLPKDPNDERNIFLEIRAGTGGDEASLFVGDLVKAYARYAENRGYKLEIVSSSEGSVGGFKEIIMLVKGTGAYSRLKYEGGTHRVQRVPQTESQGRVHTSAITVAVMPEVDDIEIEINPNDLKVDVMRSSGHGGQSVNTTDSAVRITHIPTGIVVVNQDGKSQHKNKESAMKVLKARLYEMQESERLAKESEARKSQVGSGDRSERIRTYNFPQNRISDHRINLTLYRLDAIMQDGLFDEIIEPLITHHQAQALQEQNL.

Gln231 carries the N5-methylglutamine modification. Residues 280 to 291 are compositionally biased toward basic and acidic residues; sequence SERLAKESEARK. Positions 280–303 are disordered; that stretch reads SERLAKESEARKSQVGSGDRSERI.

This sequence belongs to the prokaryotic/mitochondrial release factor family. Post-translationally, methylated by PrmC. Methylation increases the termination efficiency of RF1.

The protein resides in the cytoplasm. In terms of biological role, peptide chain release factor 1 directs the termination of translation in response to the peptide chain termination codons UAG and UAA. The sequence is that of Peptide chain release factor 1 from Campylobacter jejuni subsp. jejuni serotype O:2 (strain ATCC 700819 / NCTC 11168).